The sequence spans 635 residues: Threonine--tRNA ligase (635 aa).

The TGS domain maps to 1 to 61; sequence MVSIRLPDGS…DHDVALAIVT (61 aa). The catalytic stretch occupies residues 242–533; that stretch reads DHRKLGKQLD…LIEHHAGAMP (292 aa). Zn(2+) contacts are provided by Cys-333, His-384, and His-510.

It belongs to the class-II aminoacyl-tRNA synthetase family. Homodimer. It depends on Zn(2+) as a cofactor.

It is found in the cytoplasm. It catalyses the reaction tRNA(Thr) + L-threonine + ATP = L-threonyl-tRNA(Thr) + AMP + diphosphate + H(+). Catalyzes the attachment of threonine to tRNA(Thr) in a two-step reaction: L-threonine is first activated by ATP to form Thr-AMP and then transferred to the acceptor end of tRNA(Thr). Also edits incorrectly charged L-seryl-tRNA(Thr). The sequence is that of Threonine--tRNA ligase from Paraburkholderia phymatum (strain DSM 17167 / CIP 108236 / LMG 21445 / STM815) (Burkholderia phymatum).